A 968-amino-acid polypeptide reads, in one-letter code: uncharacterized protein (968 aa).

The helical transmembrane segment at 12–32 threads the bilayer; sequence LIFIFSLFFLILFFLESSIGF.

To E.coli YtfN.

The protein resides in the membrane. This is an uncharacterized protein from Buchnera aphidicola subsp. Schizaphis graminum (strain Sg).